The chain runs to 366 residues: Anhydro-N-acetylmuramic acid kinase (366 aa).

10-17 (GTSMDGID) is a binding site for ATP.

The protein belongs to the anhydro-N-acetylmuramic acid kinase family.

It catalyses the reaction 1,6-anhydro-N-acetyl-beta-muramate + ATP + H2O = N-acetyl-D-muramate 6-phosphate + ADP + H(+). The protein operates within amino-sugar metabolism; 1,6-anhydro-N-acetylmuramate degradation. Its pathway is cell wall biogenesis; peptidoglycan recycling. Functionally, catalyzes the specific phosphorylation of 1,6-anhydro-N-acetylmuramic acid (anhMurNAc) with the simultaneous cleavage of the 1,6-anhydro ring, generating MurNAc-6-P. Is required for the utilization of anhMurNAc either imported from the medium or derived from its own cell wall murein, and thus plays a role in cell wall recycling. This Legionella pneumophila subsp. pneumophila (strain Philadelphia 1 / ATCC 33152 / DSM 7513) protein is Anhydro-N-acetylmuramic acid kinase.